The sequence spans 164 residues: Small ribosomal subunit protein uS3m (164 aa).

The transit peptide at 1-23 directs the protein to the mitochondrion; the sequence is MLRSIQHVEALSSRQISTTSMLL.

Belongs to the universal ribosomal protein uS3 family. In terms of assembly, component of the mitochondrial ribosome small subunit (28S) which comprises a 12S rRNA and about 30 distinct proteins.

It is found in the mitochondrion. In Caenorhabditis elegans, this protein is Small ribosomal subunit protein uS3m (mrps-24).